A 43-amino-acid polypeptide reads, in one-letter code: Augerpeptide hhe9.2 (43 aa).

Residues 2–40 (EEVGCFPNVCKNDGNCSIETSTGMTRCQCLEGYTGHVCE) form the EGF-like domain. Cystine bridges form between cysteine 6-cysteine 28, cysteine 11-cysteine 30, and cysteine 17-cysteine 39.

Expressed by the venom duct.

It localises to the secreted. In Hastula hectica (Sea snail), this protein is Augerpeptide hhe9.2.